We begin with the raw amino-acid sequence, 228 residues long: MSATKTLEAVARDRVGKGAARAVRRQGQIPAVIYGGNQAPQAIAIDLIRARTLIYAGGFKTTVFEIDAGGKKTRAIPRDYQLDPVSGVPLHVDFLRVVAGQTVTVDVPVHFVNEDQAPGIKQKGGTLNVALHTLSLEVAPDQIPDAIEVDLAGREIGDVIHASDLRLPAGTYTGEPTDTVANLLPPTVLGADVEAEEAAVAEAQSAESAEGKAEAEAEATNEKNKSEA.

Residues 196–228 form a disordered region; the sequence is EEAAVAEAQSAESAEGKAEAEAEATNEKNKSEA. The segment covering 209–228 has biased composition (basic and acidic residues); that stretch reads AEGKAEAEAEATNEKNKSEA.

This sequence belongs to the bacterial ribosomal protein bL25 family. CTC subfamily. As to quaternary structure, part of the 50S ribosomal subunit; part of the 5S rRNA/L5/L18/L25 subcomplex. Contacts the 5S rRNA. Binds to the 5S rRNA independently of L5 and L18.

This is one of the proteins that binds to the 5S RNA in the ribosome where it forms part of the central protuberance. This chain is Large ribosomal subunit protein bL25, found in Methylorubrum extorquens (strain PA1) (Methylobacterium extorquens).